Consider the following 311-residue polypeptide: MKVAVLGAAGGIGQALALLLKTQLPAGSKLSLYDIAPVTPGVAVDLSHIPTAVEIKGFAGEDPTPALVDADVVLISAGVARKPGMDRSDLFNINAGIVRNLMEKVAATCPKALVGIITNPVNTTVAIAAEVMKKAGVYDKNRLFGVTTLDVIRSETFIAELKGLNVADVNINVIGGHSGVTILPLLSQVKGVSFTDEEVAALTKRIQNAGTEVVEAKAGGGSATLSMGQAACRFGLSLVRGLQGEANVVECAYVDGGSEHAQFFAQPILLGKNGVEKVMPYGEVSAFEANARDAMLDTLNADIKLGVEFVK.

NAD(+) is bound by residues 7 to 13 (GAAGGIG) and aspartate 34. Substrate is bound by residues arginine 81 and arginine 87. NAD(+) contacts are provided by residues asparagine 94 and 117–119 (ITN). Substrate is bound by residues asparagine 119 and arginine 153. The active-site Proton acceptor is histidine 177. Methionine 227 is an NAD(+) binding site.

This sequence belongs to the LDH/MDH superfamily. MDH type 1 family. In terms of assembly, homodimer.

The enzyme catalyses (S)-malate + NAD(+) = oxaloacetate + NADH + H(+). Functionally, catalyzes the reversible oxidation of malate to oxaloacetate. This Shewanella denitrificans (strain OS217 / ATCC BAA-1090 / DSM 15013) protein is Malate dehydrogenase.